The following is a 151-amino-acid chain: NADH dehydrogenase [ubiquinone] 1 beta subcomplex subunit 11, mitochondrial (151 aa).

Residues 1-29 (MAARLLSLYGRCLSAAGAMRGLPAARVRW) constitute a mitochondrion transit peptide. The disordered stretch occupies residues 40-62 (GVEKKRQREPTMQWQEDPEPEDE). The helical transmembrane segment at 87–107 (AVFFFGFSIVLVFGTTFVAYV) threads the bilayer.

Belongs to the complex I NDUFB11 subunit family. In terms of assembly, complex I is composed of 45 different subunits. Interacts with BCAP31.

It localises to the mitochondrion inner membrane. Functionally, accessory subunit of the mitochondrial membrane respiratory chain NADH dehydrogenase (Complex I), that is believed not to be involved in catalysis. Complex I functions in the transfer of electrons from NADH to the respiratory chain. The immediate electron acceptor for the enzyme is believed to be ubiquinone. This Mus musculus (Mouse) protein is NADH dehydrogenase [ubiquinone] 1 beta subcomplex subunit 11, mitochondrial (Ndufb11).